Here is a 465-residue protein sequence, read N- to C-terminus: Serine/threonine-protein kinase 38 (465 aa).

Residue Ala2 is modified to N-acetylalanine. Residues 62 to 87 (KRLRRSAHARKETEFLRLKRTRLGLE) form an interaction with S100B region. A Phosphothreonine modification is found at Thr74. The Protein kinase domain maps to 89-382 (FESLKVIGRG…VEEIKNNLFF (294 aa)). ATP contacts are provided by residues 95 to 103 (IGRGAFGEV) and Lys118. The Proton acceptor role is filled by Asp212. Ser264 carries the post-translational modification Phosphoserine. Residue Ser281 is modified to Phosphoserine; by autocatalysis. The short motif at 306–311 (WSLGVI) is the UFM1-interacting motif (UFIM) element. The AGC-kinase C-terminal domain maps to 383-455 (EGVDWEHIRE…KRFEGLTARG (73 aa)). Phosphothreonine; by STK24/MST3 is present on Thr444.

Belongs to the protein kinase superfamily. AGC Ser/Thr protein kinase family. Homodimeric S100B binds two molecules of STK38. Interacts with MOB1 and MOB2. Interacts with MAP3K1 and MAP3K2 (via the kinase catalytic domain). Forms a tripartite complex with MOBKL1B and STK3/MST2. Interacts with MICAL1; leading to inhibit the protein kinase activity by antagonizing activation by MST1/STK4. Mg(2+) is required as a cofactor. In terms of processing, ISGylated. Phosphorylated by STK3/MST2 and this is enhanced by MOBKL1B. Expressed at high levels in spleen, lung, thymus, brain and fat tissue.

Its subcellular location is the nucleus. It localises to the cytoplasm. The protein localises to the chromosome. It carries out the reaction L-seryl-[protein] + ATP = O-phospho-L-seryl-[protein] + ADP + H(+). The catalysed reaction is L-threonyl-[protein] + ATP = O-phospho-L-threonyl-[protein] + ADP + H(+). With respect to regulation, activated by binding of S100B which releases autoinhibitory N-lobe interactions, enabling ATP to bind and the autophosphorylation of Ser-281. Thr-444 then undergoes calcium-dependent phosphorylation by STK24/MST3. Interactions between phosphorylated Thr-444 and the N-lobe promote additional structural changes that complete the activation of the kinase. Autoinhibition is also released by the binding of MOB1/MOBKL1A and MOB2/HCCA2 to the N-terminal of STK38. In terms of biological role, serine/threonine-protein kinase that acts as a negative regulator of MAP3K1/2 signaling. Converts MAP3K2 from its phosphorylated form to its non-phosphorylated form and inhibits autophosphorylation of MAP3K2. Acts as an ufmylation 'reader' in a kinase-independent manner: specifically recognizes and binds mono-ufmylated histone H4 in response to DNA damage, promoting the recruitment of SUV39H1 to the double-strand breaks, resulting in ATM activation. In Mus musculus (Mouse), this protein is Serine/threonine-protein kinase 38.